We begin with the raw amino-acid sequence, 451 residues long: Zinc finger MYND domain-containing protein 10 homolog (451 aa).

Positions 412, 415, 423, 426, 432, 436, 444, and 448 each coordinate Zn(2+). The MYND-type zinc-finger motif lies at 412–448 (CATCQAKAKKKCACCKKVHYCSRDCQLKDWPQHKLVC).

The protein belongs to the ZMYND10 family. Specifically expressed in cells with flagella and motile cilia: chordotonal sensory neurons and sperm.

Its subcellular location is the cytoplasm. The protein resides in the cell projection. It localises to the cilium. It is found in the dynein axonemal particle. Functionally, plays a role in axonemal structure organization and motility. May be involved in axonemal pre-assembly of inner and outer dynein arms (IDA and ODA, respectively) for proper axoneme building for cilia motility. The chain is Zinc finger MYND domain-containing protein 10 homolog from Drosophila melanogaster (Fruit fly).